We begin with the raw amino-acid sequence, 408 residues long: Peptidase T (408 aa).

His-78 is a binding site for Zn(2+). Asp-80 is an active-site residue. Asp-141 serves as a coordination point for Zn(2+). The active-site Proton acceptor is the Glu-175. Positions 176, 198, and 380 each coordinate Zn(2+).

The protein belongs to the peptidase M20B family. The cofactor is Zn(2+).

Its subcellular location is the cytoplasm. It catalyses the reaction Release of the N-terminal residue from a tripeptide.. Its function is as follows. Cleaves the N-terminal amino acid of tripeptides. The protein is Peptidase T of Clostridium botulinum (strain Loch Maree / Type A3).